Reading from the N-terminus, the 294-residue chain is Kynurenine formamidase (294 aa).

Residues 1 to 14 (MSRWKDMNKDELER) show a composition bias toward basic and acidic residues. A disordered region spans residues 1-20 (MSRWKDMNKDELERQFSPSQ). The HGGXW signature appears at 84–88 (HGGYW). The active-site Nucleophile is serine 153. Catalysis depends on residues aspartate 236 and histidine 269.

The protein belongs to the kynurenine formamidase family. In terms of assembly, homodimer.

The protein resides in the cytoplasm. It localises to the cytosol. It is found in the nucleus. The enzyme catalyses N-formyl-L-kynurenine + H2O = L-kynurenine + formate + H(+). Its pathway is amino-acid degradation; L-tryptophan degradation via kynurenine pathway; L-kynurenine from L-tryptophan: step 2/2. Its function is as follows. Catalyzes the hydrolysis of N-formyl-L-kynurenine to L-kynurenine, the second step in the kynurenine pathway of tryptophan degradation. Kynurenine may be further oxidized to nicotinic acid, NAD(H) and NADP(H). Required for elimination of toxic metabolites. The sequence is that of Kynurenine formamidase (afmid) from Salmo salar (Atlantic salmon).